A 166-amino-acid polypeptide reads, in one-letter code: Zinc finger CCHC domain-containing protein 13 (166 aa).

The segment at 4-21 (KDFFACGHSGHWARGCPR) adopts a CCHC-type 1; degenerate zinc-finger fold. The CCHC-type 2; degenerate zinc-finger motif lies at 45 to 62 (YTCYCCGESGRNAKNCVL). 4 consecutive CCHC-type zinc fingers follow at residues 65-82 (NICY…DCKD), 89-106 (QHCY…DCDR), 110-127 (QKCY…DCAQ), and 128-145 (VKCY…NCSK).

The chain is Zinc finger CCHC domain-containing protein 13 (ZCCHC13) from Homo sapiens (Human).